A 474-amino-acid polypeptide reads, in one-letter code: Serine--tRNA ligase (474 aa).

278–280 contacts L-serine; that stretch reads TAE. ATP is bound at residue 309 to 311; sequence RSE. Glutamate 332 is an L-serine binding site. Residue 396 to 399 participates in ATP binding; sequence EISS. Residue serine 432 participates in L-serine binding.

The protein belongs to the class-II aminoacyl-tRNA synthetase family. Type-1 seryl-tRNA synthetase subfamily. In terms of assembly, homodimer. The tRNA molecule binds across the dimer.

It localises to the cytoplasm. The catalysed reaction is tRNA(Ser) + L-serine + ATP = L-seryl-tRNA(Ser) + AMP + diphosphate + H(+). It catalyses the reaction tRNA(Sec) + L-serine + ATP = L-seryl-tRNA(Sec) + AMP + diphosphate + H(+). Its pathway is aminoacyl-tRNA biosynthesis; selenocysteinyl-tRNA(Sec) biosynthesis; L-seryl-tRNA(Sec) from L-serine and tRNA(Sec): step 1/1. Functionally, catalyzes the attachment of serine to tRNA(Ser). Is also able to aminoacylate tRNA(Sec) with serine, to form the misacylated tRNA L-seryl-tRNA(Sec), which will be further converted into selenocysteinyl-tRNA(Sec). This chain is Serine--tRNA ligase, found in Caulobacter sp. (strain K31).